We begin with the raw amino-acid sequence, 505 residues long: ATP synthase subunit alpha, chloroplastic (505 aa).

170 to 177 (GDRQTGKT) lines the ATP pocket.

Belongs to the ATPase alpha/beta chains family. F-type ATPases have 2 components, CF(1) - the catalytic core - and CF(0) - the membrane proton channel. CF(1) has five subunits: alpha(3), beta(3), gamma(1), delta(1), epsilon(1). CF(0) has four main subunits: a, b, b' and c.

It localises to the plastid. It is found in the chloroplast thylakoid membrane. It carries out the reaction ATP + H2O + 4 H(+)(in) = ADP + phosphate + 5 H(+)(out). Produces ATP from ADP in the presence of a proton gradient across the membrane. The alpha chain is a regulatory subunit. The polypeptide is ATP synthase subunit alpha, chloroplastic (Oenothera biennis (German evening primrose)).